Reading from the N-terminus, the 411-residue chain is Coiled-coil domain-containing protein 159 (411 aa).

Residues 84–113 form a disordered region; it reads EQAGKSGAWEKEWDSEPQPHEGTPCSSSDV. Basic and acidic residues predominate over residues 91–102; the sequence is AWEKEWDSEPQP. Residues 269–305 are a coiled coil; sequence EELELVREEVTFIYQKLQDQEDEISENLLNIQKMQKT. Residues 372 to 411 are disordered; it reads RASSLRGQKGHQCKSSQCPSWDSDSDWERPFSKSGSYPPA. Residues 384 to 393 are compositionally biased toward polar residues; that stretch reads CKSSQCPSWD.

As to quaternary structure, interacts with DYNLT2. Interacts with GGNBP1. Interacts with OSBP2. In terms of tissue distribution, expressed in spermatids but undetectable in the spermatozoon (at protein level). Highly expressed in the testis (at protein level).

Its function is as follows. Functions during spermatid development; may participate in the centrosome reduction procedure of spermatids and is required for the formation of the connecting piece/sperm head-tail coupling apparatus (HTCA) and the correct and tight attachment of the flagellum to the nuclear envelope. The protein is Coiled-coil domain-containing protein 159 (Ccdc159) of Mus musculus (Mouse).